We begin with the raw amino-acid sequence, 421 residues long: Synaptotagmin-1 (421 aa).

The Vesicular segment spans residues 1 to 57 (MVSASHPEALAAPVTTVATLVPHNATEPASPGEGKEDAFSKLKQKFMNELHKIPLPP). A glycan (N-linked (GlcNAc...) asparagine) is linked at Asn24. Residues 58-79 (WALIAIAIVAVLLVVTCCFCVC) form a helical membrane-spanning segment. S-palmitoyl cysteine attachment occurs at residues Cys74, Cys75, Cys77, Cys79, and Cys82. Over 80-421 (KKCLFKKKNK…EVDAMLAVKK (342 aa)) the chain is Cytoplasmic. Residues 112-141 (TMKDQALKDDDAETGLTDGEEKEEPKEEEK) form a disordered region. Residues 121–133 (DDAETGLTDGEEK) show a composition bias toward acidic residues. Thr128 carries the phosphothreonine modification. Residues 135-381 (EPKEEEKLGK…AIGKVFVGYN (247 aa)) form a phospholipid binding region. Positions 141–260 (KLGKLQYSLD…DFGHVTEEWR (120 aa)) constitute a C2 1 domain. Positions 171, 172, and 178 each coordinate Ca(2+). Tyr229 bears the Phosphotyrosine mark. Residues Asp230, Phe231, Asp232, Ser235, Lys236, and Asp238 each contribute to the Ca(2+) site. Phosphoserine is present on Ser264. The C2 2 domain occupies 272-405 (KLGDICFSLR…NPRRPIAQWH (134 aa)). Ca(2+)-binding residues include Asp303 and Asp309. Phosphoserine is present on residues Ser342 and Ser344. Ca(2+) contacts are provided by Asp363, Asp365, and Asp371.

It belongs to the synaptotagmin family. Homotetramer. Heterodimer; heterodimerizes with SYT2 in presence of calcium. Interacts with SCAMP5. Interacts with STON2. Forms a complex with SV2B, syntaxin 1 and SNAP25. Interacts with SV2A, SV2B and SV2C. Interacts with RIMS1. Interacts with PRRT2. Interacts with DNAJC5 in a phosphorylation-dependent manner. Interacts (via N-terminus) with RAB3A. Interacts with SYT12. Interacts with calmodulin. Interacts with DNM1 (via C-terminal proline-rich domain (PRD)); this interaction facilitates vesicle fission during clathrin-mediated endocytosis (CME). In terms of assembly, (Microbial infection) Interacts with C.botulinum neurotoxin type B (BoNT/B, botB). Has lower affinity for BoNT/B than Syt2; mutating its residues to match those in Syt2 increases its affinity. As to quaternary structure, (Microbial infection) Interacts with C.botulinum neurotoxin type G (BoNT/G, botG). The cofactor is Ca(2+). In terms of processing, glycosylated. In terms of tissue distribution, expressed in the brain (at protein level). Predominantly expressed in rostral, phylogenetically younger brain regions, and in some endocrine tissues.

The protein resides in the cytoplasmic vesicle. The protein localises to the secretory vesicle membrane. It is found in the secretory vesicle. It localises to the synaptic vesicle membrane. Its subcellular location is the chromaffin granule membrane. The protein resides in the cytoplasm. Functionally, calcium sensor that participates in triggering neurotransmitter release at the synapse. May have a regulatory role in the membrane interactions during trafficking of synaptic vesicles at the active zone of the synapse. It binds acidic phospholipids with a specificity that requires the presence of both an acidic head group and a diacyl backbone. A Ca(2+)-dependent interaction between synaptotagmin and putative receptors for activated protein kinase C has also been reported. It can bind to at least three additional proteins in a Ca(2+)-independent manner; these are neurexins, syntaxin and AP2. Plays a role in dendrite formation by melanocytes. (Microbial infection) Receptor for C.botulinum neurotoxin type B (BoNT/B, botB); interaction is improved in the presence of gangliosides. BoNT/B toxin binds to the membrane proximal vesicular domain of Syt1 (residues 32-51). In terms of biological role, (Microbial infection) Receptor for C.botulinum neurotoxin type G (BoNT/G, botG); unlike the case with BoNT/B, interaction is not improved in the presence of gangliosides. BoNT/G toxin binds to the vesicular domain of Syt1 (residues 32-53). The polypeptide is Synaptotagmin-1 (Rattus norvegicus (Rat)).